A 155-amino-acid polypeptide reads, in one-letter code: Small ribosomal subunit protein uS7 (155 aa).

It belongs to the universal ribosomal protein uS7 family. As to quaternary structure, part of the 30S ribosomal subunit. Contacts proteins S9 and S11.

Its function is as follows. One of the primary rRNA binding proteins, it binds directly to 16S rRNA where it nucleates assembly of the head domain of the 30S subunit. Is located at the subunit interface close to the decoding center, probably blocks exit of the E-site tRNA. The sequence is that of Small ribosomal subunit protein uS7 from Thioalkalivibrio sulfidiphilus (strain HL-EbGR7).